The sequence spans 416 residues: Histidine--tRNA ligase (416 aa).

It belongs to the class-II aminoacyl-tRNA synthetase family.

It localises to the cytoplasm. The catalysed reaction is tRNA(His) + L-histidine + ATP = L-histidyl-tRNA(His) + AMP + diphosphate + H(+). This chain is Histidine--tRNA ligase, found in Methanococcus maripaludis (strain DSM 14266 / JCM 13030 / NBRC 101832 / S2 / LL).